Reading from the N-terminus, the 472-residue chain is Eukaryotic translation initiation factor 2 subunit 3 (472 aa).

Residue Ala-2 is modified to N-acetylalanine. Ser-16 is subject to Phosphoserine. The 210-residue stretch at 39 to 248 folds into the tr-type G domain; the sequence is QATINIGTIG…IVKKIPVPPR (210 aa). The tract at residues 48–55 is G1; sequence GHVAHGKS. 51 to 56 provides a ligand contact to GTP; it reads AHGKST. The tract at residues 76–80 is G2; the sequence is NITIK. A G3 region spans residues 134 to 137; it reads DCPG. GTP is bound by residues 190–193 and 225–227; these read NKID and SAQ. The tract at residues 190 to 193 is G4; the sequence is NKID. The interval 225–227 is G5; it reads SAQ. The interval 457 to 469 is interacts with CDC123; sequence GQIRRGVTIKPTV.

This sequence belongs to the TRAFAC class translation factor GTPase superfamily. Classic translation factor GTPase family. EIF2G subfamily. In terms of assembly, eukaryotic translation initiation factor 2 eIF2 is a heterotrimeric complex composed of an alpha (EIF2S1), a beta (EIF2S2) and a gamma (EIF2S3) chain. eIF2 is member of the 43S pre-initiation complex (43S PIC). Interacts (via C-terminus) with CDC123; the interaction is direct.

Its subcellular location is the cytoplasm. It localises to the cytosol. The enzyme catalyses GTP + H2O = GDP + phosphate + H(+). Member of the eIF2 complex that functions in the early steps of protein synthesis by forming a ternary complex with GTP and initiator tRNA. This complex binds to a 40S ribosomal subunit, followed by mRNA binding to form the 43S pre-initiation complex (43S PIC). Junction of the 60S ribosomal subunit to form the 80S initiation complex is preceded by hydrolysis of the GTP bound to eIF2 and release of an eIF2-GDP binary complex. In order for eIF2 to recycle and catalyze another round of initiation, the GDP bound to eIF2 must exchange with GTP by way of a reaction catalyzed by eIF-2B. The sequence is that of Eukaryotic translation initiation factor 2 subunit 3 (EIF2S3) from Pongo abelii (Sumatran orangutan).